Reading from the N-terminus, the 656-residue chain is Pheromone-processing carboxypeptidase KEX1 (656 aa).

A signal peptide spans 1–17 (MFFHAILVLIQVALALG). Residues 18–536 (ASPRAGSSER…DNNTSHKIER (519 aa)) lie on the Lumenal side of the membrane. N-linked (GlcNAc...) asparagine glycans are attached at residues asparagine 61 and asparagine 118. Active-site residues include serine 180 and aspartate 388. Asparagine 434 and asparagine 442 each carry an N-linked (GlcNAc...) asparagine glycan. Histidine 445 is a catalytic residue. The chain crosses the membrane as a helical span at residues 537–557 (AIQLLVIIVLLWGIYALYSSY). The Cytoplasmic portion of the chain corresponds to 558–656 (KSRPSSIIKS…SRNEPSSNQK (99 aa)). Residues 626–656 (MSSASPIDDFVVVSDDEEEEPSRNEPSSNQK) are disordered.

The protein belongs to the peptidase S10 family.

It is found in the golgi apparatus. The protein resides in the trans-Golgi network membrane. It carries out the reaction Preferential release of a C-terminal arginine or lysine residue.. Protease with a carboxypeptidase B-like function involved in the C-terminal processing of the lysine and arginine residues from protein precursors. Promotes cell fusion and is involved in the programmed cell death. The sequence is that of Pheromone-processing carboxypeptidase KEX1 (KEX1) from Meyerozyma guilliermondii (strain ATCC 6260 / CBS 566 / DSM 6381 / JCM 1539 / NBRC 10279 / NRRL Y-324) (Yeast).